Reading from the N-terminus, the 355-residue chain is Heat-inducible transcription repressor HrcA (355 aa).

Belongs to the HrcA family.

Functionally, negative regulator of class I heat shock genes (grpE-dnaK-dnaJ and groELS operons). Prevents heat-shock induction of these operons. This Nitratidesulfovibrio vulgaris (strain DP4) (Desulfovibrio vulgaris) protein is Heat-inducible transcription repressor HrcA.